Reading from the N-terminus, the 299-residue chain is Probable lipid kinase YegS-like (299 aa).

The 132-residue stretch at 2–133 (EKNPITLLIL…IDIAKVNDGH (132 aa)) folds into the DAGKc domain. ATP-binding positions include Thr-40, 66–72 (GDGTVNE), and Thr-95. Residues Leu-215, Asp-218, and Leu-220 each contribute to the Mg(2+) site. Glu-271 functions as the Proton acceptor in the catalytic mechanism.

Belongs to the diacylglycerol/lipid kinase family. YegS lipid kinase subfamily. The cofactor is Mg(2+). It depends on Ca(2+) as a cofactor.

It is found in the cytoplasm. Its function is as follows. Probably phosphorylates lipids; the in vivo substrate is unknown. The polypeptide is Probable lipid kinase YegS-like (Pectobacterium atrosepticum (strain SCRI 1043 / ATCC BAA-672) (Erwinia carotovora subsp. atroseptica)).